A 253-amino-acid polypeptide reads, in one-letter code: Flap endonuclease Xni (253 aa).

Asp-104 lines the Mg(2+) pocket. The 5'-3' exonuclease domain occupies 160 to 250 (VAPQQLTDFW…HGNLQQLRLN (91 aa)). The K(+) site is built by Leu-171, Ala-172, Pro-180, Ile-182, and Ile-185. The segment at 184-189 (GIGAKT) is interaction with DNA.

The protein belongs to the Xni family. The cofactor is Mg(2+). K(+) is required as a cofactor.

Has flap endonuclease activity. During DNA replication, flap endonucleases cleave the 5'-overhanging flap structure that is generated by displacement synthesis when DNA polymerase encounters the 5'-end of a downstream Okazaki fragment. The protein is Flap endonuclease Xni of Edwardsiella ictaluri (strain 93-146).